Consider the following 283-residue polypeptide: Ubiquinone biosynthesis protein COQ4, mitochondrial (283 aa).

A mitochondrion-targeting transit peptide spans 1–25 (MAIAKSVRARAVGLRSLRVLCAQRS). His-166, Asp-167, His-170, and Glu-182 together coordinate Zn(2+).

The protein belongs to the COQ4 family. In terms of assembly, component of a multi-subunit COQ enzyme complex, composed of at least COQ3, COQ4, COQ5, COQ6, COQ7 and COQ9. Zn(2+) is required as a cofactor.

It localises to the mitochondrion inner membrane. The catalysed reaction is a 4-hydroxy-3-methoxy-5-(all-trans-polyprenyl)benzoate + H(+) = a 2-methoxy-6-(all-trans-polyprenyl)phenol + CO2. It functions in the pathway cofactor biosynthesis; ubiquinone biosynthesis. In terms of biological role, lyase that catalyzes the C1-decarboxylation of 4-hydroxy-3-methoxy-5-(all-trans-polyprenyl)benzoic acid into 2-methoxy-6-(all-trans-polyprenyl)phenol during ubiquinone biosynthesis. This chain is Ubiquinone biosynthesis protein COQ4, mitochondrial, found in Coccidioides immitis (strain RS) (Valley fever fungus).